The primary structure comprises 198 residues: Dephospho-CoA kinase (198 aa).

Residues 2 to 90 (LIAIVGKPGV…KLSLVTKPLL (89 aa)) enclose the DPCK domain. 10 to 15 (GVGKTS) serves as a coordination point for ATP.

It belongs to the CoaE family.

The protein localises to the cytoplasm. It carries out the reaction 3'-dephospho-CoA + ATP = ADP + CoA + H(+). It participates in cofactor biosynthesis; coenzyme A biosynthesis; CoA from (R)-pantothenate: step 5/5. In terms of biological role, catalyzes the phosphorylation of the 3'-hydroxyl group of dephosphocoenzyme A to form coenzyme A. This chain is Dephospho-CoA kinase, found in Mycoplasma genitalium (strain ATCC 33530 / DSM 19775 / NCTC 10195 / G37) (Mycoplasmoides genitalium).